Consider the following 844-residue polypeptide: MMYSCRERRMITVKWSLCLIFCLSNSILVFAKHLCLPDQRDSLWGFKNEFHVPSEKWRNNTDCCSWDGVSCDPKTGNVVGLDLAGSDLNGPLRSNSSLFRLQHLQKLYLGCNTSFGSLSYNDGLKGGELLDSIGNLKYLKVLSLRGCNLFGKIPSSLGNLSYLTHLDLSFNDFTGVIPDSMGNLNYLRVLNLGKCNFYGKVPSSLGNLSYLAQLDLSYNDFTREGPDSMGNLNRLTDMLLKLNSLTDIDLGSNQLKGMLPSNMSSLSKLEYFYIGGNSFSGSIPSSLFMIPSLVELDLQRNHFSALEIGNISSQSKLQVLILGGNNFNPDIVDLSIFSPLLSLGYLDVSGINLKISSTVSLPSPIEYLVLSSCNISEFPKFLRNQTKLYSLDISANQIEGQVPEWLWSLPELQSINISHNSFNGFEGPADVIQGGGELYMLDISSNIFQDPFPLLPVDSMNFLFSSNNRFSGEIPKTICELDNLVMLVLSNNNFSGSIPRCFENLHLYVLHLRNNNLSGIFPEEAISDRLQSLDVGHNLFSGELPKSLINCSALEFLYVEDNRISDTFPSWLELLPNFQILVLRSNEFYGPIFSPGDSLSFPRLRIFDISENRFTGVLPSDYFAPWSAMSSVVDRIIQHFFQGYYHNSVVLTNKGLNMELVGSGFTIYKTIDVSGNRLEGDIPESISLLKELIVLNMSNNAFTGHIPPSLSNLSNLQSLDLSQNRLSGSIPGELGELTFLARMNFSYNRLEGPIPQTTQIQTQDSSSFTENPGLCGLPLKKNCGGKEEATKQEQDEEKEEEEQVFSWIAAAIGYVPGVVCGLTIGHILVSHKRDWFMRIVSLFT.

The N-terminal stretch at 1-31 (MMYSCRERRMITVKWSLCLIFCLSNSILVFA) is a signal peptide. At 32–803 (KHLCLPDQRD…QDEEKEEEEQ (772 aa)) the chain is on the extracellular side. Residues N59, N95, N112, and N159 are each glycosylated (N-linked (GlcNAc...) asparagine). 25 LRR repeats span residues 102–126 (QHLQ…GLKG), 136–160 (LKYL…LGNL), 161–183 (SYLT…SMGN), 185–208 (NYLR…LGNL), 209–231 (SYLA…SMGN), 242–265 (LNSL…NMSS), 266–290 (LSKL…LFMI), 292–313 (SLVE…NISS), 315–339 (SKLQ…IFSP), 345–362 (YLDV…VSLP), 363–385 (SPIE…LRNQ), 386–409 (TKLY…LWSL), 410–434 (PELQ…VIQG), 436–457 (GELY…LLPV), 458–481 (DSMN…ICEL), 482–504 (DNLV…CFEN), 506–527 (HLYV…EAIS), 528–551 (DRLQ…LINC), 553–574 (ALEF…WLEL), 575–601 (LPNF…SLSF), 602–625 (PRLR…YFAP), 665–689 (FTIY…ISLL), 690–713 (KELI…LSNL), 714–737 (SNLQ…LGEL), and 739–762 (FLAR…QIQT). The N-linked (GlcNAc...) asparagine glycan is linked to N207. N262 is a glycosylation site (N-linked (GlcNAc...) asparagine). N310 carries N-linked (GlcNAc...) asparagine glycosylation. N-linked (GlcNAc...) asparagine glycosylation is found at N374 and N384. N-linked (GlcNAc...) asparagine glycosylation is present at N416. N493, N516, and N550 each carry an N-linked (GlcNAc...) asparagine glycan. Residues N696 and N712 are each glycosylated (N-linked (GlcNAc...) asparagine). An N-linked (GlcNAc...) asparagine glycan is attached at N744. Residues 804-824 (VFSWIAAAIGYVPGVVCGLTI) traverse the membrane as a helical segment. At 825 to 844 (GHILVSHKRDWFMRIVSLFT) the chain is on the cytoplasmic side.

It belongs to the RLP family.

The protein resides in the cell membrane. In Arabidopsis thaliana (Mouse-ear cress), this protein is Receptor-like protein 49.